Here is a 191-residue protein sequence, read N- to C-terminus: Fe/S biogenesis protein NfuA (191 aa).

The [4Fe-4S] cluster site is built by cysteine 149 and cysteine 152.

The protein belongs to the NfuA family. Homodimer. It depends on [4Fe-4S] cluster as a cofactor.

Involved in iron-sulfur cluster biogenesis. Binds a 4Fe-4S cluster, can transfer this cluster to apoproteins, and thereby intervenes in the maturation of Fe/S proteins. Could also act as a scaffold/chaperone for damaged Fe/S proteins. In Klebsiella pneumoniae (strain 342), this protein is Fe/S biogenesis protein NfuA.